The sequence spans 496 residues: Adenosine transporter 1 (496 aa).

Residues M1–E26 lie on the Cytoplasmic side of the membrane. The chain crosses the membrane as a helical span at residues F27–V47. Over F48 to N77 the chain is Extracellular. The helical transmembrane segment at V78–L98 threads the bilayer. The Cytoplasmic segment spans residues L99 to M107. Residues L108 to V128 form a helical membrane-spanning segment. Topologically, residues P129 to E135 are extracellular. Residues G136–F156 traverse the membrane as a helical segment. At E157–T172 the chain is on the cytoplasmic side. A helical membrane pass occupies residues S173–V193. At K194–S208 the chain is on the extracellular side. A helical transmembrane segment spans residues Y209–M229. Residues R230–K336 are Cytoplasmic-facing. A helical membrane pass occupies residues W337 to A357. The Extracellular portion of the chain corresponds to T358–K365. The chain crosses the membrane as a helical span at residues W366–P386. The Cytoplasmic segment spans residues A387 to R399. Residues W400–S420 traverse the membrane as a helical segment. Over Y421–Y431 the chain is Extracellular. The helical transmembrane segment at V432–G452 threads the bilayer. Residues P453–R464 are Cytoplasmic-facing. A helical transmembrane segment spans residues F465–L485. Residues S486–Y496 lie on the Extracellular side of the membrane.

It belongs to the SLC29A/ENT transporter (TC 2.A.57) family.

The protein resides in the membrane. It carries out the reaction adenosine(in) = adenosine(out). Functionally, adenosine transporter. The chain is Adenosine transporter 1 from Crithidia fasciculata.